Reading from the N-terminus, the 288-residue chain is Acetyl-coenzyme A carboxylase carboxyl transferase subunit beta (288 aa).

The region spanning 32–288 (MWAKCPSCKR…LRLHSLEGWR (257 aa)) is the CoA carboxyltransferase N-terminal domain. The Zn(2+) site is built by Cys36, Cys39, Cys54, and Cys57. A C4-type zinc finger spans residues 36–57 (CPSCKRTLYTKEMGAEKICPHC).

It belongs to the AccD/PCCB family. In terms of assembly, acetyl-CoA carboxylase is a heterohexamer composed of biotin carboxyl carrier protein (AccB), biotin carboxylase (AccC) and two subunits each of ACCase subunit alpha (AccA) and ACCase subunit beta (AccD). Zn(2+) is required as a cofactor.

Its subcellular location is the cytoplasm. The enzyme catalyses N(6)-carboxybiotinyl-L-lysyl-[protein] + acetyl-CoA = N(6)-biotinyl-L-lysyl-[protein] + malonyl-CoA. The protein operates within lipid metabolism; malonyl-CoA biosynthesis; malonyl-CoA from acetyl-CoA: step 1/1. In terms of biological role, component of the acetyl coenzyme A carboxylase (ACC) complex. Biotin carboxylase (BC) catalyzes the carboxylation of biotin on its carrier protein (BCCP) and then the CO(2) group is transferred by the transcarboxylase to acetyl-CoA to form malonyl-CoA. This Enterococcus faecalis (strain ATCC 700802 / V583) protein is Acetyl-coenzyme A carboxylase carboxyl transferase subunit beta.